The following is a 250-amino-acid chain: uncharacterized protein (250 aa).

The segment covering 207–226 (LNDRDAINKSEEARKAREEV) has biased composition (basic and acidic residues). The segment at 207–250 (LNDRDAINKSEEARKAREEVFIPSEPSKPSIASKRSSASKSTKS) is disordered. Over residues 233–250 (SKPSIASKRSSASKSTKS) the composition is skewed to low complexity.

The protein resides in the plastid. It is found in the chloroplast. This is an uncharacterized protein from Chlorella vulgaris (Green alga).